Consider the following 285-residue polypeptide: Purine biosynthesis transcriptional repressor PurR (285 aa).

Positions 1-73 (MKFRRSGRLV…GAAGGVKYIP (73 aa)) are DNA binding domain. Residues 74-285 (KMKQAEAEEF…NLLKNGETES (212 aa)) are effector binding domain. Tyrosine 102 is a binding site for guanosine 3',5'-bis(diphosphate). Residues alanine 138, threonine 139, lysine 140, and arginine 160 each contribute to the 5-phospho-alpha-D-ribose 1-diphosphate site. The guanosine 3',5'-bis(diphosphate) site is built by glycine 178 and serine 179. 5 residues coordinate 5-phospho-alpha-D-ribose 1-diphosphate: aspartate 203, aspartate 204, phenylalanine 205, lysine 207, and alanine 208. Lysine 207 is a binding site for guanosine 3',5'-bis(diphosphate). Guanosine 3',5'-bis(diphosphate) is bound by residues glycine 209, glycine 210, and threonine 211. Residue threonine 211 coordinates 5-phospho-alpha-D-ribose 1-diphosphate.

This sequence belongs to the purine/pyrimidine phosphoribosyltransferase family. PurR subfamily. As to quaternary structure, homodimer.

The binding of PurR to DNA, and therefore the repressor activity, is influenced by interaction with the effector molecules 5-phosphoribosyl 1-pyrophosphate (PRPP) and (p)ppGpp. PRPP binds to PurR and reduces affinity of PurR for DNA, which inhibits the repressor activity and induces transcription of the target genes. On the contrary, (p)ppGpp enhances binding of PurR to DNA and repression of the transcription. PRPP and (p)ppGpp compete for PurR binding and allosteric control of transcription. ppGpp maintains PurR-DNA interaction and prevents PRPP from de-repressing PurR regulation during conditions that lead to (p)ppGpp induction, such as upon amino acid starvation. DNA-binding transcriptional repressor that controls the expression of a number of genes involved in the synthesis, metabolism and transport of purines. In response to a signal of excess adenine, represses the transcription of the pur operon, which encodes enzymes of the purine biosynthetic pathway. It also represses the expression of the purA and purR genes. In addition, controls the expression of several other genes or operons, which encode enzymes or transporters playing a role in purine nucleotide metabolism. Acts by binding directly to specific DNA sequences, named PurBoxes, in the upstream control regions of affected genes. Two PurBoxes are required for high-affinity PurR binding. Also responds to amino acid starvation via (p)ppGpp, which strongly increases PurR activity and repression of purine nucleotide biosynthesis genes. This is Purine biosynthesis transcriptional repressor PurR from Bacillus subtilis (strain 168).